An 80-amino-acid chain; its full sequence is Histone H1.M6.1 (80 aa).

Positions 1 to 80 (MSDAAVPPKK…KAVKKAPKKK (80 aa)) are disordered. The segment covering 11–80 (ASPKKAAAKK…KAVKKAPKKK (70 aa)) has biased composition (basic residues).

The protein resides in the nucleus. It localises to the chromosome. This is Histone H1.M6.1 from Trypanosoma cruzi.